Here is a 424-residue protein sequence, read N- to C-terminus: Carbohydrate sulfotransferase 8 (424 aa).

The Cytoplasmic segment spans residues 1–10 (MTLRPGTMRL). Residues 11–31 (ACMFSSILLFGAAGLLLFISL) traverse the membrane as a helical; Signal-anchor for type II membrane protein segment. The Lumenal portion of the chain corresponds to 32–424 (QDPTELAPQQ…NYSKPFADLY (393 aa)). Residues 47–107 (FNIRPRQPHH…PLQRGTRLRL (61 aa)) form a disordered region. The span at 66–77 (GDLKEPTERVTR) shows a compositional bias: basic and acidic residues. N-linked (GlcNAc...) asparagine glycosylation occurs at asparagine 128. Residues 198–204 (PKAGCSN) and 258–266 (REPFERLVS) each bind 3'-phosphoadenylyl sulfate. 3 N-linked (GlcNAc...) asparagine glycosylation sites follow: asparagine 294, asparagine 367, and asparagine 415.

Belongs to the sulfotransferase 2 family. As to expression, predominantly expressed in pituitary gland. In brain, it is expressed in pituitary gland, cerebellum, medulla oblongata, pons, thalamus and spinal cord. Expressed in the epidermis. Expressed at lower level in lung, spleen, adrenal gland, placenta, prostate, testis, mammary gland and trachea.

It is found in the golgi apparatus membrane. Catalyzes the transfer of sulfate to position 4 of non-reducing N-acetylgalactosamine (GalNAc) residues in both N-glycans and O-glycans. Required for biosynthesis of glycoprotein hormones lutropin and thyrotropin, by mediating sulfation of their carbohydrate structures. Only active against terminal GalNAcbeta1,GalNAcbeta. Not active toward chondroitin. The sequence is that of Carbohydrate sulfotransferase 8 (CHST8) from Homo sapiens (Human).